Here is a 509-residue protein sequence, read N- to C-terminus: Lysine--tRNA ligase (509 aa).

Positions 418 and 425 each coordinate Mg(2+).

This sequence belongs to the class-II aminoacyl-tRNA synthetase family. In terms of assembly, homodimer. Requires Mg(2+) as cofactor.

Its subcellular location is the cytoplasm. The catalysed reaction is tRNA(Lys) + L-lysine + ATP = L-lysyl-tRNA(Lys) + AMP + diphosphate. This chain is Lysine--tRNA ligase, found in Acinetobacter baumannii (strain ATCC 17978 / DSM 105126 / CIP 53.77 / LMG 1025 / NCDC KC755 / 5377).